The primary structure comprises 653 residues: Protein CBFA2T3 (653 aa).

The span at 1-10 (MPASRLRDRA) shows a compositional bias: basic and acidic residues. A disordered region spans residues 1 to 109 (MPASRLRDRA…HTHREDGPAT (109 aa)). The tract at residues 1–127 (MPASRLRDRA…CLKWSMVCLL (127 aa)) is required for nucleolar targeting (in isoform 1). The segment at 1–430 (MPASRLRDRA…RRCQEADREE (430 aa)) is mediates interaction with PDE7A (in isoform 2). Residues 1-435 (MPASRLRDRA…ADREELNHWA (435 aa)) are mediates localization to the nucleus. The segment covering 11 to 23 (ASSASGSTCGSMS) has biased composition (low complexity). The segment covering 75-86 (STPPSMPPPPPA) has biased composition (pro residues). The interval 145 to 242 (PNGFSNGPAT…IPFLKANLPL (98 aa)) is interaction with ZBTB33. The TAFH domain occupies 171 to 266 (ARQLSKLKRF…TPAQYLAQHE (96 aa)). Residues 176–268 (KLKRFLTTLQ…AQYLAQHEQL (93 aa)) form an interaction with HIF1A region. Positions 284-342 (LLEVNENGKRRTPDRTKENGSDRDPLHPEHLSKRPCTLNPAQRYSPSNGPPQPTPPPHY) are disordered. Residues 289 to 315 (ENGKRRTPDRTKENGSDRDPLHPEHLS) show a composition bias toward basic and acidic residues. The segment covering 331 to 341 (NGPPQPTPPPH) has biased composition (pro residues). A nervy homology region 2 (NHR2); essential for down-regulation of PFKFB3, PFKFB4 and PDK1 expression region spans residues 394–412 (EEWKHLNNLLNCIMDMVEK). Basic and acidic residues predominate over residues 434–446 (WARRYSDAEDTKK). Residues 434–472 (WARRYSDAEDTKKGPAPAAARPRSSSAGPEGPQLDVPRE) form a disordered region. Residues 447 to 462 (GPAPAAARPRSSSAGP) show a composition bias toward low complexity. 2 positions are modified to phosphoserine: Ser457 and Ser459. A Phosphothreonine modification is found at Thr479. The mediates interaction with PRKAR2A stretch occupies residues 485 to 506 (DIWRKAEEAVNEVKRQAMSELQ). Residues 485 to 533 (DIWRKAEEAVNEVKRQAMSELQKAVSDAERKAHELITTERAKMERALAE) are nervy homology region 3 (NHR3); essential for down-regulation of PFKFB3, PFKFB4 and PDK1 expression. Positions 488–543 (RKAEEAVNEVKRQAMSELQKAVSDAERKAHELITTERAKMERALAEAKRQASEDAL) form a coiled coil. Cys556, Cys559, Cys567, Cys570, Cys576, Cys580, His588, and Cys592 together coordinate Zn(2+). The MYND-type zinc finger occupies 556–592 (CWNCGRKASETCSGCNAARYCGSFCQHRDWEKHHHVC). A disordered region spans residues 603–653 (VADPVPGPPEAAHSLGPSLPVGAASPSEAGSAGPSRPGSPSPPGPLDTVPR). The segment covering 622-638 (PVGAASPSEAGSAGPSR) has biased composition (low complexity). Phosphoserine occurs at positions 637 and 641. Thr650 is subject to Phosphothreonine.

The protein belongs to the CBFA2T family. In terms of assembly, homooligomer. Homotetramerization is mediated by nervy homology region 2 (NRH2). Can interact with RUNX1T1 and CBFA2T2; heterotetramerization between members of the CBFA2T family is proposed. Component of a TAL-1 complex composed at least of CBFA2T3, LDB1, TAL1 and TCF3. Interacts with ERBB4, HDAC1, HDAC2, HDAC3, HDAC6, HDAC8, NCOR1, NCOR2, and ZNF652. According to PubMed:12242670, may not interact with HDAC6. Interacts with PLXNA1, PLXNA3 and PRKAR1A. Isoform 2 interacts with PRKAR2A, PDE7A and probably PDE4A. Interacts with ZBTB4, ZBTB38 and ZBTB33. Interacts with HIF1A and EGLN1. Interacts with the AML1-MTG8/ETO fusion protein. As to expression, widely expressed with higher expression in heart, pancreas, skeletal muscle, spleen, thymus and peripheral blood leukocytes. Expressed in hematopoietic cells (at protein level).

It localises to the nucleus. The protein resides in the nucleolus. The protein localises to the nucleoplasm. Its subcellular location is the golgi apparatus membrane. Functionally, transcriptional corepressor which facilitates transcriptional repression via its association with DNA-binding transcription factors and recruitment of other corepressors and histone-modifying enzymes. Can repress the expression of MMP7 in a ZBTB33-dependent manner. Reduces the protein levels and stability of the transcriptinal regulator HIF1A; interacts with EGLN1 and promotes the HIF1A prolyl hydroxylation-dependent ubiquitination and proteasomal degradation pathway. Contributes to inhibition of glycolysis and stimulation of mitochondrial respiration by down-regulating the expression of glycolytic genes including PFKFB3, PFKFB4, PDK1, PFKP, LDHA and HK1 which are direct targets of HIF1A. Regulates the proliferation and the differentiation of erythroid progenitors by repressing the expression of TAL1 target genes. Plays a role in granulocyte differentiation. Its function is as follows. Isoform 2 functions as an A-kinase-anchoring protein. The protein is Protein CBFA2T3 (CBFA2T3) of Homo sapiens (Human).